Reading from the N-terminus, the 146-residue chain is Hut operon positive regulatory protein (146 aa).

This sequence belongs to the HutP family. In terms of assembly, homohexamer.

In terms of biological role, antiterminator that binds to cis-acting regulatory sequences on the mRNA in the presence of histidine, thereby suppressing transcription termination and activating the hut operon for histidine utilization. In Bacillus cereus (strain ZK / E33L), this protein is Hut operon positive regulatory protein.